The chain runs to 219 residues: Thiamine-phosphate synthase (219 aa).

4-amino-2-methyl-5-(diphosphooxymethyl)pyrimidine-binding positions include 44–48 (QFREK) and asparagine 79. The Mg(2+) site is built by aspartate 80 and aspartate 99. A 4-amino-2-methyl-5-(diphosphooxymethyl)pyrimidine-binding site is contributed by serine 117. 2-[(2R,5Z)-2-carboxy-4-methylthiazol-5(2H)-ylidene]ethyl phosphate is bound at residue 143 to 145 (TST). A 4-amino-2-methyl-5-(diphosphooxymethyl)pyrimidine-binding site is contributed by lysine 146. 2-[(2R,5Z)-2-carboxy-4-methylthiazol-5(2H)-ylidene]ethyl phosphate-binding positions include glycine 175 and 195 to 196 (IS).

Belongs to the thiamine-phosphate synthase family. The cofactor is Mg(2+).

The enzyme catalyses 2-[(2R,5Z)-2-carboxy-4-methylthiazol-5(2H)-ylidene]ethyl phosphate + 4-amino-2-methyl-5-(diphosphooxymethyl)pyrimidine + 2 H(+) = thiamine phosphate + CO2 + diphosphate. It catalyses the reaction 2-(2-carboxy-4-methylthiazol-5-yl)ethyl phosphate + 4-amino-2-methyl-5-(diphosphooxymethyl)pyrimidine + 2 H(+) = thiamine phosphate + CO2 + diphosphate. The catalysed reaction is 4-methyl-5-(2-phosphooxyethyl)-thiazole + 4-amino-2-methyl-5-(diphosphooxymethyl)pyrimidine + H(+) = thiamine phosphate + diphosphate. It functions in the pathway cofactor biosynthesis; thiamine diphosphate biosynthesis; thiamine phosphate from 4-amino-2-methyl-5-diphosphomethylpyrimidine and 4-methyl-5-(2-phosphoethyl)-thiazole: step 1/1. Functionally, condenses 4-methyl-5-(beta-hydroxyethyl)thiazole monophosphate (THZ-P) and 2-methyl-4-amino-5-hydroxymethyl pyrimidine pyrophosphate (HMP-PP) to form thiamine monophosphate (TMP). In Bacillus cereus (strain ATCC 14579 / DSM 31 / CCUG 7414 / JCM 2152 / NBRC 15305 / NCIMB 9373 / NCTC 2599 / NRRL B-3711), this protein is Thiamine-phosphate synthase.